We begin with the raw amino-acid sequence, 184 residues long: MKKLSILAVLAASPAMAATGPFLSLSNTNFIVTLAFLIFMGILLYAKVPGRVLGMLDKRSVQIRTELEEARALREEARTILASYDRKQKEVQEQAARIVASARDEAQAAAEQAKADLRASIARRLAAAEDQIASAEAGAVRAIREQAVSVAVAAAADLLSRQMTPAAASASIDESIKEVEARFH.

A helical transmembrane segment spans residues 4-24 (LSILAVLAASPAMAATGPFLS).

The protein belongs to the ATPase B chain family. In terms of assembly, F-type ATPases have 2 components, F(1) - the catalytic core - and F(0) - the membrane proton channel. F(1) has five subunits: alpha(3), beta(3), gamma(1), delta(1), epsilon(1). F(0) has three main subunits: a(1), b(2) and c(10-14). The alpha and beta chains form an alternating ring which encloses part of the gamma chain. F(1) is attached to F(0) by a central stalk formed by the gamma and epsilon chains, while a peripheral stalk is formed by the delta and b chains.

It localises to the cell inner membrane. In terms of biological role, f(1)F(0) ATP synthase produces ATP from ADP in the presence of a proton or sodium gradient. F-type ATPases consist of two structural domains, F(1) containing the extramembraneous catalytic core and F(0) containing the membrane proton channel, linked together by a central stalk and a peripheral stalk. During catalysis, ATP synthesis in the catalytic domain of F(1) is coupled via a rotary mechanism of the central stalk subunits to proton translocation. Its function is as follows. Component of the F(0) channel, it forms part of the peripheral stalk, linking F(1) to F(0). The polypeptide is ATP synthase subunit b 1 (Cereibacter sphaeroides (strain ATCC 17029 / ATH 2.4.9) (Rhodobacter sphaeroides)).